A 220-amino-acid polypeptide reads, in one-letter code: Cytidylate kinase (220 aa).

Position 11 to 19 (11 to 19 (GPTASGKGT)) interacts with ATP.

The protein belongs to the cytidylate kinase family. Type 1 subfamily.

It is found in the cytoplasm. It catalyses the reaction CMP + ATP = CDP + ADP. The enzyme catalyses dCMP + ATP = dCDP + ADP. The chain is Cytidylate kinase from Polynucleobacter asymbioticus (strain DSM 18221 / CIP 109841 / QLW-P1DMWA-1) (Polynucleobacter necessarius subsp. asymbioticus).